The chain runs to 217 residues: Somatotropin (217 aa).

A signal peptide spans 1 to 26 (MATGSHTTTLLLAVALLGLPWPQEAG). H46 provides a ligand contact to Zn(2+). C79 and C190 are oxidised to a cystine. E199 contacts Zn(2+). C207 and C215 form a disulfide bridge.

Belongs to the somatotropin/prolactin family.

The protein localises to the secreted. Functionally, plays an important role in growth control. Its major role in stimulating body growth is to stimulate the liver and other tissues to secrete IGF1. It stimulates both the differentiation and proliferation of myoblasts. It also stimulates amino acid uptake and protein synthesis in muscle and other tissues. In Galago senegalensis (Northern lesser bushbaby), this protein is Somatotropin (GH1).